The chain runs to 546 residues: MLLDTLLELAGGINNVTRILAPQGQVVLALKHPPHAPHLPDDVSLQSVLGEWQLSVQRTAEVSDQQLAAIGKAIAERQKRATLPYQTALDCPYRPQWHISPPQGLLNDPNGFIYHQEEYHLFYQWHPFACEHKDKYWVHLKSLDLVHWQWQSVALTPSDWFDSHGVFSGHAVSHQQDLWLFYTGNTRLGTERQRQTMQCAARMNANGEFEKLGPVIRCLPEGVTEHIRDPKVIYTQGKWQMLLGAQTLAHQGRLAVYHSDDLLHWHFDKLYGDELGDYGYMWECPDWFELQGEAFFVFGPQGIASANPHHTIEHQNRIFRATQNAQGEIALLQGWPLDEGFDFYAPQTAQTADGRRVLCGWMGLPDETQHPSCDQGWIHQLTALRELEWREGKIYQHPLRELDTLQSEPHTLLLSDTVTELKTKSFDLQVTLPWGCELRLMQNAQYCVTLTLDAENRLLRLDRSATQIRQGDTIRELKLDSPTVELRILADQSSLEIFINQGEHVMTSRIFTPLDATGISLHGASVDAKLYYMAPASAPFNLEVNV.

Substrate is bound by residues 105-108 (LLND), Gln124, 167-168 (FS), 228-229 (RD), and Glu283. Residue Asp108 is part of the active site.

It belongs to the glycosyl hydrolase 32 family.

It localises to the cytoplasm. It carries out the reaction Hydrolysis of terminal non-reducing beta-D-fructofuranoside residues in beta-D-fructofuranosides.. The protein operates within glycan biosynthesis; sucrose metabolism. Its function is as follows. Enables the bacterium to metabolize sucrose as a sole carbon source. This Vibrio cholerae serotype O1 (strain ATCC 39541 / Classical Ogawa 395 / O395) protein is Probable sucrose-6-phosphate hydrolase (cscA).